A 113-amino-acid chain; its full sequence is U11-theraphotoxin-Hhn1d (113 aa).

Residues 1–21 (MNTVRVTFLLVFVVAVSLGQA) form the signal peptide. A propeptide spanning residues 22–74 (DKDENRMEMKDKTEQGKSYLHFAENLLLQKLEDVEAKLLEKDSEKSINSRQKR) is cleaved from the precursor. Disulfide bonds link C75–C90, C82–C95, and C89–C110.

It belongs to the neurotoxin 14 (magi-1) family. 01 (HNTX-16) subfamily. As to expression, expressed by the venom gland.

It localises to the secreted. Functionally, probable ion channel inhibitor. The protein is U11-theraphotoxin-Hhn1d of Cyriopagopus hainanus (Chinese bird spider).